A 127-amino-acid polypeptide reads, in one-letter code: Major sperm protein 2 (127 aa).

Ala-2 bears the N-acetylalanine mark. The region spanning 9–126 (DIHTQPGSKI…RRKNLPIEYN (118 aa)) is the MSP domain.

Sperm.

The protein resides in the cell projection. The protein localises to the pseudopodium. Its subcellular location is the cytoplasm. It is found in the cytoskeleton. In terms of biological role, central component in molecular interactions underlying sperm crawling. Forms an extensive filament system that extends from sperm villipoda, along the leading edge of the pseudopod. This is Major sperm protein 2 from Onchocerca volvulus.